Reading from the N-terminus, the 154-residue chain is SKP1-like protein 13 (154 aa).

Residues 96–154 form an interaction with the F-box domain of F-box proteins region; that stretch reads MLAANYLNIKDLLDLGCQTVADMITGKKPDEIRALLGIENDFTPEEEEEIRKENQWAFE.

Belongs to the SKP1 family. As to quaternary structure, part of a SCF (SKP1-cullin-F-box) protein ligase complex. Interacts with ADO3/FKF1, EBF1, PP2A13, SKIP15, SKIP16, CPR1/CPR30, At1g55000, At3g61590, At1g67340, At1g78100, At3g04660, At4g38940, At4g39550 and At5g49610. As to expression, mostly expressed in inflorescences, and, to a lower extent, in seedlings and siliques. Also detected in cotyledons, leaves, pollen and seeds.

The protein resides in the nucleus. The protein operates within protein modification; protein ubiquitination. Involved in ubiquitination and subsequent proteasomal degradation of target proteins. Together with CUL1, RBX1 and a F-box protein, it forms a SCF E3 ubiquitin ligase complex. The functional specificity of this complex depends on the type of F-box protein. In the SCF complex, it serves as an adapter that links the F-box protein to CUL1. The sequence is that of SKP1-like protein 13 (ASK13) from Arabidopsis thaliana (Mouse-ear cress).